The primary structure comprises 96 residues: U-reduvitoxin-Pr12a (96 aa).

The first 20 residues, 1–20 (MKTALLLFFALVFIAFETEA), serve as a signal peptide directing secretion. Disulfide bonds link C21/C38, C33/C53, and C36/C47. 2 consecutive Pacifastin domains span residues 21-55 (CRPG…ICPP) and 59-94 (KLEC…CIHK). The interval 54–56 (PPR) is pro-Pro-Arg motif necessary for proteolytic processing. Cystine bridges form between C62–C77, C72–C91, and C75–C86.

The protein belongs to the protease inhibitor I19 family. Expressed by the venom gland.

It is found in the secreted. Its function is as follows. Inhibits trypsin activity and prophenoloxidase (PPO) activation, an enzyme essential for both clotting and insect innate immune responses. It does not inhibit activity of chymotrypsin and protease K, and has no effect on phenoloxidase (PO) activity. The protein is U-reduvitoxin-Pr12a of Platymeris rhadamanthus (Red spot assassin bug).